The chain runs to 211 residues: WAP four-disulfide core domain protein 1 (211 aa).

The N-terminal stretch at 1 to 23 is a signal peptide; the sequence is MGNCGRKVLRALSFLLLLGSSSA. Residues 50 to 99 form the WAP domain; it reads RQPHADRCPPPPRTLPPGACQATRCQADSECPRHRRCCYNGCAYACLEAV. Disulfide bonds link cysteine 57/cysteine 87, cysteine 69/cysteine 91, cysteine 74/cysteine 86, and cysteine 80/cysteine 95. Basic and acidic residues predominate over residues 182–198; it reads VLRQRLHKEYPEGDSKN. The disordered stretch occupies residues 182–211; sequence VLRQRLHKEYPEGDSKNVAEPGKGQQRHFP.

It is found in the secreted. In terms of biological role, has growth inhibitory activity. The sequence is that of WAP four-disulfide core domain protein 1 (Wfdc1) from Mus musculus (Mouse).